The sequence spans 660 residues: Translation factor GUF1, mitochondrial (660 aa).

A mitochondrion-targeting transit peptide spans 1–42 (MRSCVRTASSVLQSWRAHTVLRNGCPLPSRTLERLPRLARSY). Positions 62–242 (ERYRNFCIVA…AVVEKIPAPV (181 aa)) constitute a tr-type G domain. GTP-binding positions include 71-78 (AHVDHGKS), 135-139 (DTPGH), and 189-192 (NKVD).

This sequence belongs to the TRAFAC class translation factor GTPase superfamily. Classic translation factor GTPase family. LepA subfamily.

The protein localises to the mitochondrion inner membrane. The enzyme catalyses GTP + H2O = GDP + phosphate + H(+). In terms of biological role, promotes mitochondrial protein synthesis. May act as a fidelity factor of the translation reaction, by catalyzing a one-codon backward translocation of tRNAs on improperly translocated ribosomes. Binds to mitochondrial ribosomes in a GTP-dependent manner. This chain is Translation factor GUF1, mitochondrial, found in Phaeosphaeria nodorum (strain SN15 / ATCC MYA-4574 / FGSC 10173) (Glume blotch fungus).